A 206-amino-acid chain; its full sequence is Outer-membrane lipoprotein carrier protein (206 aa).

Positions 1–21 are cleaved as a signal peptide; sequence MKKLLCAVLLSPLLYSNAVLA.

It belongs to the LolA family. In terms of assembly, monomer.

It localises to the periplasm. In terms of biological role, participates in the translocation of lipoproteins from the inner membrane to the outer membrane. Only forms a complex with a lipoprotein if the residue after the N-terminal Cys is not an aspartate (The Asp acts as a targeting signal to indicate that the lipoprotein should stay in the inner membrane). In Shewanella oneidensis (strain ATCC 700550 / JCM 31522 / CIP 106686 / LMG 19005 / NCIMB 14063 / MR-1), this protein is Outer-membrane lipoprotein carrier protein.